Consider the following 493-residue polypeptide: Glutamyl-tRNA(Gln) amidotransferase subunit A (493 aa).

Catalysis depends on charge relay system residues Lys79 and Ser159. Residue Ser183 is the Acyl-ester intermediate of the active site.

It belongs to the amidase family. GatA subfamily. As to quaternary structure, heterotrimer of A, B and C subunits.

It catalyses the reaction L-glutamyl-tRNA(Gln) + L-glutamine + ATP + H2O = L-glutaminyl-tRNA(Gln) + L-glutamate + ADP + phosphate + H(+). Functionally, allows the formation of correctly charged Gln-tRNA(Gln) through the transamidation of misacylated Glu-tRNA(Gln) in organisms which lack glutaminyl-tRNA synthetase. The reaction takes place in the presence of glutamine and ATP through an activated gamma-phospho-Glu-tRNA(Gln). This chain is Glutamyl-tRNA(Gln) amidotransferase subunit A, found in Sinorhizobium medicae (strain WSM419) (Ensifer medicae).